The sequence spans 639 residues: tRNA uridine 5-carboxymethylaminomethyl modification enzyme MnmG (639 aa).

13-18 (GGGHAG) contributes to the FAD binding site. 274–288 (GPRYCPSIEDKIHRF) lines the NAD(+) pocket.

Belongs to the MnmG family. Homodimer. Heterotetramer of two MnmE and two MnmG subunits. FAD serves as cofactor.

The protein resides in the cytoplasm. Functionally, NAD-binding protein involved in the addition of a carboxymethylaminomethyl (cmnm) group at the wobble position (U34) of certain tRNAs, forming tRNA-cmnm(5)s(2)U34. The chain is tRNA uridine 5-carboxymethylaminomethyl modification enzyme MnmG from Polynucleobacter asymbioticus (strain DSM 18221 / CIP 109841 / QLW-P1DMWA-1) (Polynucleobacter necessarius subsp. asymbioticus).